The chain runs to 480 residues: Flotillin-like protein 2 (480 aa).

Cys37 carries S-palmitoyl cysteine lipidation. Positions 237–257 form a coiled coil; that stretch reads ENQREAEVAQANSELAKKKAA.

This sequence belongs to the band 7/mec-2 family. Flotillin subfamily. Post-translationally, may be palmitoylated. Expressed in flowers in green pods. Primarily expressed in vascular tissues. Upon induction of nodulation, expansion of expression in the root cortex in the region of elongating root hairs, which will eventually become colonized by bacteria. Expressed in the infection zone in nodules.

The protein localises to the cell membrane. It localises to the membrane. It is found in the caveola. May act as a scaffolding protein within caveolar membranes, functionally participating in formation of caveolae or caveolae-like vesicles. Required for early symbiotic events and nodules formation. In Medicago truncatula (Barrel medic), this protein is Flotillin-like protein 2 (FLOT2).